We begin with the raw amino-acid sequence, 1195 residues long: ATP-dependent DNA helicase Hel308 (1195 aa).

ATP-binding positions include Q20 and 39–46 (IPTASGKT). Residues 26 to 196 (RGLLDKNKNF…WLNAELIVDD (171 aa)) enclose the Helicase ATP-binding domain. Positions 143 to 146 (DEIH) match the DEAH box motif. A DOD-type homing endonuclease domain is found at 451–584 (FIGYFIGDGY…LQFVLLRFGI (134 aa)).

Belongs to the helicase family. Hel308 subfamily. As to quaternary structure, monomer. In terms of processing, this protein undergoes a protein self splicing that involves a post-translational excision of the intervening region (intein) followed by peptide ligation.

The enzyme catalyses Couples ATP hydrolysis with the unwinding of duplex DNA by translocating in the 3'-5' direction.. It catalyses the reaction ATP + H2O = ADP + phosphate + H(+). Its function is as follows. DNA-dependent ATPase and 3'-5' DNA helicase that may be involved in repair of stalled replication forks. This is ATP-dependent DNA helicase Hel308 from Methanocaldococcus jannaschii (strain ATCC 43067 / DSM 2661 / JAL-1 / JCM 10045 / NBRC 100440) (Methanococcus jannaschii).